Reading from the N-terminus, the 258-residue chain is Ribosomal RNA small subunit methyltransferase A (258 aa).

Positions 13, 15, 40, 61, 86, and 106 each coordinate S-adenosyl-L-methionine.

It belongs to the class I-like SAM-binding methyltransferase superfamily. rRNA adenine N(6)-methyltransferase family. RsmA subfamily.

It is found in the cytoplasm. The enzyme catalyses adenosine(1518)/adenosine(1519) in 16S rRNA + 4 S-adenosyl-L-methionine = N(6)-dimethyladenosine(1518)/N(6)-dimethyladenosine(1519) in 16S rRNA + 4 S-adenosyl-L-homocysteine + 4 H(+). Specifically dimethylates two adjacent adenosines (A1518 and A1519) in the loop of a conserved hairpin near the 3'-end of 16S rRNA in the 30S particle. May play a critical role in biogenesis of 30S subunits. The chain is Ribosomal RNA small subunit methyltransferase A from Coxiella burnetii (strain RSA 331 / Henzerling II).